The chain runs to 852 residues: 2-deoxy-glucose resistant protein 2 (852 aa).

A compositionally biased stretch (polar residues) spans 1 to 18 (MFKSKTSTLSYDETPNSN). The interval 1 to 60 (MFKSKTSTLSYDETPNSNEGDRNATPVNPKEKSQTKHLNIPGDRSRHSSIADSKRSSSRY) is disordered. 6 WD repeats span residues 171-210 (LFKNSICCCTFSHDGKYMVIGCKDGSLHLWKVINSPVKRS), 278-316 (EHALDILDANWSKNGFLITASMDKTAKLWHPERKYSLKT), 318-358 (VHPD…VSYA), 426-471 (QHGP…ELFK), 476-515 (GSSRHRGQFLMMKNEPVVFTGSDDHWFYTWKMQSFNLSAE), and 651-689 (GFSSNLSNVVNNVGTILITTDSQGLIRVFRTDILPEIRK). Phosphoserine is present on Ser716. Residues 723-748 (DERSSTEDNEFSTTPPSNTHNSRPSH) form a disordered region. Residues 733–744 (FSTTPPSNTHNS) show a composition bias toward polar residues.

The protein belongs to the WD repeat DGR2 family.

This chain is 2-deoxy-glucose resistant protein 2 (DGR2), found in Saccharomyces cerevisiae (strain ATCC 204508 / S288c) (Baker's yeast).